We begin with the raw amino-acid sequence, 465 residues long: Ribulose bisphosphate carboxylase large chain (465 aa).

Lys-4 carries the post-translational modification N6,N6,N6-trimethyllysine. Residues Asn-113 and Thr-163 each contribute to the substrate site. The Proton acceptor role is filled by Lys-165. Lys-167 contributes to the substrate binding site. Positions 191, 193, and 194 each coordinate Mg(2+). An N6-carboxylysine modification is found at Lys-191. Residue His-284 is the Proton acceptor of the active site. Substrate-binding residues include Arg-285, His-317, and Ser-369.

This sequence belongs to the RuBisCO large chain family. Type I subfamily. Heterohexadecamer of 8 large chains and 8 small chains; disulfide-linked. The disulfide link is formed within the large subunit homodimers. It depends on Mg(2+) as a cofactor. In terms of processing, the disulfide bond which can form in the large chain dimeric partners within the hexadecamer appears to be associated with oxidative stress and protein turnover.

It is found in the plastid. Its subcellular location is the chloroplast. It carries out the reaction 2 (2R)-3-phosphoglycerate + 2 H(+) = D-ribulose 1,5-bisphosphate + CO2 + H2O. It catalyses the reaction D-ribulose 1,5-bisphosphate + O2 = 2-phosphoglycolate + (2R)-3-phosphoglycerate + 2 H(+). Its function is as follows. RuBisCO catalyzes two reactions: the carboxylation of D-ribulose 1,5-bisphosphate, the primary event in carbon dioxide fixation, as well as the oxidative fragmentation of the pentose substrate in the photorespiration process. Both reactions occur simultaneously and in competition at the same active site. The sequence is that of Ribulose bisphosphate carboxylase large chain from Hamamelis mollis (Chinese witch hazel).